The sequence spans 22 residues: Superoxide dismutase [Cu-Zn] (22 aa).

Belongs to the Cu-Zn superoxide dismutase family. Homodimer. It depends on Cu cation as a cofactor. Zn(2+) is required as a cofactor.

It is found in the cytoplasm. It carries out the reaction 2 superoxide + 2 H(+) = H2O2 + O2. Destroys radicals which are normally produced within the cells and which are toxic to biological systems. This is Superoxide dismutase [Cu-Zn] from Hordeum vulgare (Barley).